Reading from the N-terminus, the 226-residue chain is PKHD-type hydroxylase PiuC (226 aa).

One can recognise a Fe2OG dioxygenase domain in the interval 78–178; the sequence is KVFPPLFNCY…RYASFFWTQS (101 aa). Fe cation contacts are provided by His96, Asp98, and His159. Arg169 is a binding site for 2-oxoglutarate.

Fe(2+) is required as a cofactor. The cofactor is L-ascorbate.

The polypeptide is PKHD-type hydroxylase PiuC (piuC) (Pseudomonas aeruginosa (strain ATCC 15692 / DSM 22644 / CIP 104116 / JCM 14847 / LMG 12228 / 1C / PRS 101 / PAO1)).